The sequence spans 113 residues: C-X-C motif chemokine 6 (113 aa).

A signal peptide spans 1–36 (MSLLPSRAARVPGPSSSLCALLALLLLTPPGPLVSA). 2 disulfides stabilise this stretch: cysteine 48/cysteine 74 and cysteine 50/cysteine 90.

It belongs to the intercrine alpha (chemokine CxC) family.

Its subcellular location is the secreted. Its function is as follows. Chemotactic for neutrophil granulocytes. Signals through binding and activation of its receptors (CXCR1 and CXCR2). In addition to its chemotactic and angiogenic properties, it has strong antibacterial activity against Gram-positive and Gram-negative bacteria (90-fold-higher when compared to CXCL5 and CXCL7). This chain is C-X-C motif chemokine 6 (CXCL6), found in Equus caballus (Horse).